A 164-amino-acid polypeptide reads, in one-letter code: Interferon gamma (164 aa).

A signal peptide spans 1–19 (MTCQTYNLFVLSVIMIYYG). N-linked (GlcNAc...) asparagine glycosylation is found at asparagine 42 and asparagine 61.

It belongs to the type II (or gamma) interferon family. As to quaternary structure, homodimer.

The protein resides in the secreted. Its function is as follows. Produced by lymphocytes activated by specific antigens or mitogens. IFN-gamma, in addition to having antiviral activity, has important immunoregulatory functions. It is a potent activator of macrophages, it has antiproliferative effects on transformed cells and it can potentiate the antiviral and antitumor effects of the type I interferons. The protein is Interferon gamma (IFNG) of Phasianus colchicus colchicus (Black-necked pheasant).